Here is a 368-residue protein sequence, read N- to C-terminus: FAD-dependent monooxygenase phomE (368 aa).

Ala11 serves as a coordination point for FAD. Residues Arg140 and Tyr178 contribute to the active site. Asp249 and Gly262 together coordinate FAD.

This sequence belongs to the paxM FAD-dependent monooxygenase family. In terms of assembly, monomer. The cofactor is FAD.

Functionally, FAD-dependent monooxygenase; part of the gene cluster that mediates the biosynthesis of the phomopsins, a group of hexapeptide mycotoxins which infects lupins and causes lupinosis disease in livestock. The role of phomE within the phomopsins biosynthesis pathway has still to be determined. The pathway starts with the processing of the precursor phomA by several endopeptidases including kexin proteases as well as the cluster-specific S41 family peptidase phomP1 and the oligopeptidase phomG to produce 10 identical copies of the hexapeptide Tyr-Val-Ile-Pro-Ile-Asp. After being excised from the precursor peptide, the core peptides are cyclized and modified post-translationally by enzymes encoded within the gene cluster. The timing and order of proteolysis of the phomA precursor and PTMs are still unknown. Two tyrosinase-like enzymes, phomQ1 and phomQ2, catalyze the chlorination and hydroxylation of Tyr, respectively. PhomYb, is proposed to be involved in the construction of the macrocyclic structure. The other 4 ustYa family proteins may be involved in PTMs that generate the unique structure of phomopsin A. PhomYa is required for the hydroxylation of C-beta of Tyr. PhomYc, phomYd, and phomYe are responsible for the biosynthesis of 2,3-dehydroisoleucine (dIle), 2,3-dehydroaspartic acid (dAsp), and 3,4-dehydroproline (dPro), respectively. While dIle formation by phomYc is indispensable for the installation of dAsp by phomYd, the order of the other PTMs have not been elucidated yet. Most of the biosynthetic enzymes likely have broad substrate specificity, and thus, there might be a metabolic grid from a precursor to phomopsin A. The enzyme(s) responsible for the biosynthesis of 3,4-dehydrovaline (dVal) have also not been identified yet. Finally, phomM acts as an S-adenosylmethionine-dependent alpha-N-methyltransferase that catalyzes two successive N-methylation reactions, converting N-desmethyl-phomopsin A to phomopsin A and phomopsin A further to an N,N-dimethylated congener called phomopsin E. In Diaporthe leptostromiformis (Lupinosis disease fungus), this protein is FAD-dependent monooxygenase phomE.